The chain runs to 95 residues: Co-chaperonin GroES (95 aa).

A compositionally biased stretch (basic and acidic residues) spans 12-22 (VKPSPAEEKTK). Residues 12–38 (VKPSPAEEKTKGGLYIPDSGKEKPQHG) are disordered.

The protein belongs to the GroES chaperonin family. In terms of assembly, heptamer of 7 subunits arranged in a ring. Interacts with the chaperonin GroEL.

The protein localises to the cytoplasm. In terms of biological role, together with the chaperonin GroEL, plays an essential role in assisting protein folding. The GroEL-GroES system forms a nano-cage that allows encapsulation of the non-native substrate proteins and provides a physical environment optimized to promote and accelerate protein folding. GroES binds to the apical surface of the GroEL ring, thereby capping the opening of the GroEL channel. The sequence is that of Co-chaperonin GroES from Chloroherpeton thalassium (strain ATCC 35110 / GB-78).